The sequence spans 420 residues: rRNA methyltransferase 3, mitochondrial (420 aa).

The N-terminal 40 residues, 1–40, are a transit peptide targeting the mitochondrion; sequence MAALVRPARFVVRPLLQVVQAWDLDARRWVRALRRSPVKV. Positions 49 to 88 are disordered; sequence EQKRAPGKQPRKAPSEASAQEQREKQPLEESASRAPSTWE. The segment covering 69 to 80 has biased composition (basic and acidic residues); the sequence is EQREKQPLEESA. 3 residues coordinate S-adenosyl-L-methionine: glycine 356, isoleucine 380, and leucine 389.

This sequence belongs to the class IV-like SAM-binding methyltransferase superfamily. RNA methyltransferase TrmH family. Expressed at same level in normal liver and hepatocarcinoma.

The protein resides in the mitochondrion. It carries out the reaction guanosine(1370) in 16S rRNA + S-adenosyl-L-methionine = 2'-O-methylguanosine(1370) in 16S rRNA + S-adenosyl-L-homocysteine + H(+). Functionally, S-adenosyl-L-methionine-dependent 2'-O-ribose methyltransferase that catalyzes the formation of 2'-O-methylguanosine at position 1370 (Gm1370) in the 16S mitochondrial large subunit ribosomal RNA (mtLSU rRNA), a conserved modification in the peptidyl transferase domain of the mtLSU rRNA. Also required for formation of 2'-O-methyluridine at position 1369 (Um1369) mediated by MRM2. In Homo sapiens (Human), this protein is rRNA methyltransferase 3, mitochondrial.